The primary structure comprises 341 residues: Aspartate carbamoyltransferase catalytic subunit (341 aa).

Carbamoyl phosphate-binding residues include arginine 89 and threonine 90. L-aspartate is bound at residue lysine 117. Carbamoyl phosphate-binding residues include arginine 139, histidine 169, and glutamine 172. Residues arginine 202 and arginine 257 each coordinate L-aspartate. Residues glycine 298 and proline 299 each coordinate carbamoyl phosphate.

This sequence belongs to the aspartate/ornithine carbamoyltransferase superfamily. ATCase family. Heterododecamer (2C3:3R2) of six catalytic PyrB chains organized as two trimers (C3), and six regulatory PyrI chains organized as three dimers (R2).

It carries out the reaction carbamoyl phosphate + L-aspartate = N-carbamoyl-L-aspartate + phosphate + H(+). It participates in pyrimidine metabolism; UMP biosynthesis via de novo pathway; (S)-dihydroorotate from bicarbonate: step 2/3. Its function is as follows. Catalyzes the condensation of carbamoyl phosphate and aspartate to form carbamoyl aspartate and inorganic phosphate, the committed step in the de novo pyrimidine nucleotide biosynthesis pathway. The polypeptide is Aspartate carbamoyltransferase catalytic subunit (Paraburkholderia xenovorans (strain LB400)).